The chain runs to 599 residues: Elongation factor 4 (599 aa).

One can recognise a tr-type G domain in the interval 2 to 184 (KNIRNFSIIA…RLVRDIPPPE (183 aa)). Residues 14 to 19 (DHGKST) and 131 to 134 (NKID) each bind GTP.

It belongs to the TRAFAC class translation factor GTPase superfamily. Classic translation factor GTPase family. LepA subfamily.

The protein localises to the cell inner membrane. It catalyses the reaction GTP + H2O = GDP + phosphate + H(+). In terms of biological role, required for accurate and efficient protein synthesis under certain stress conditions. May act as a fidelity factor of the translation reaction, by catalyzing a one-codon backward translocation of tRNAs on improperly translocated ribosomes. Back-translocation proceeds from a post-translocation (POST) complex to a pre-translocation (PRE) complex, thus giving elongation factor G a second chance to translocate the tRNAs correctly. Binds to ribosomes in a GTP-dependent manner. This Escherichia coli (strain UTI89 / UPEC) protein is Elongation factor 4.